The chain runs to 98 residues: uncharacterized protein (98 aa).

It belongs to the HesB/IscA family.

This is an uncharacterized protein from Staphylococcus aureus (strain MRSA252).